The primary structure comprises 561 residues: MSDTARILGGPSASSSRDGGMELNSFTEVSQTNSRSHSTKEEEGQVDDQQRPAREEETGVLGGYKLVLVTIGLCFCIFCTSLDNTIVATAVPRITQQFHSLDDVGWYASAYLLTTCAVTLTFGRLYTFFPIKWVYLSALLIFELGSFICGITPSSLGLILGRAVAGLGGGGLLSGSLLIISQCVPSARRPAFSGFIMSIFAVASVIAPLMGGAFTDHVSWRWCFYINLPFGLVSAVVILFTFQHTKPVIQASLREKAVGLDPLGTATFLPGIVCLLLATQWGGAQYPWGDGRVVALFVLFGVLLVCFIGLQLWARERATVPPRLLRGRNIWGSALYGFCLNGAMFTFVYYLPIWFQAVQGASATESGIRNLPLVISNVVFAIISGVLVSMTGYLGPFMLLSAAMASISAGLLSTLQPSSGAGEWIGYQVLLGLSIGVGFQVPIFVVQTTLASTDIPTATALMTFIQLLGGAIFVSVAQNMFRNQLATDIRTVLPMLDPTAVINAGPTSLRGMYSGETLTTLVALYNDAVVHTFYLAIGLAAASFLAATVIQWRPLAKAVGE.

The tract at residues 1 to 55 is disordered; that stretch reads MSDTARILGGPSASSSRDGGMELNSFTEVSQTNSRSHSTKEEEGQVDDQQRPARE. The span at 24–36 shows a compositional bias: polar residues; the sequence is NSFTEVSQTNSRS. The span at 38 to 55 shows a compositional bias: basic and acidic residues; that stretch reads STKEEEGQVDDQQRPARE. The next 13 membrane-spanning stretches (helical) occupy residues 59 to 79, 103 to 123, 128 to 148, 164 to 184, 194 to 214, 222 to 242, 257 to 277, 293 to 313, 335 to 355, 378 to 398, 425 to 445, 457 to 477, and 530 to 550; these read GVLG…CIFC, DVGW…LTFG, FFPI…GSFI, VAGL…SQCV, GFIM…GGAF, WCFY…LFTF, AVGL…CLLL, VVAL…LQLW, LYGF…PIWF, VVFA…GPFM, IGYQ…PIFV, TATA…VSVA, and VHTF…ATVI.

The protein belongs to the major facilitator superfamily. TCR/Tet family.

It is found in the cell membrane. Its function is as follows. Efflux pump; part of the gene cluster that mediates the biosynthesis of bifonsecin B, a dimeric gamma-naphthopyrone. This Aspergillus brasiliensis (strain CBS 101740 / IMI 381727 / IBT 21946) protein is Efflux pump bfoC.